A 32-amino-acid chain; its full sequence is Snake venom serine proteinase (32 aa).

The Peptidase S1 domain occupies 1–32; sequence VIGGDECDINEHRFLVFLTXASGLACGGTLIN.

This sequence belongs to the peptidase S1 family. Snake venom subfamily. In terms of assembly, monomer. In terms of processing, contains 6 disulfide bonds. Glycosylated. As to expression, expressed by the venom gland.

Its subcellular location is the secreted. Functionally, cleaves a kininogen analog with the release of kallidin (lysyl-bradykinin). Completely cleaves fibrinogen Aalpha chain, partially cleaves Bbeta chain and has no activity on gamma chain. The polypeptide is Snake venom serine proteinase (Bitis arietans (African puff adder)).